Consider the following 109-residue polypeptide: uncharacterized protein (109 aa).

Helical transmembrane passes span His16 to Phe36, Leu52 to Leu72, and Ile87 to Val107.

It is found in the cell membrane. This is an uncharacterized protein from Salmonella typhimurium (strain LT2 / SGSC1412 / ATCC 700720).